The following is a 345-amino-acid chain: S-adenosylmethionine:tRNA ribosyltransferase-isomerase (345 aa).

Belongs to the QueA family. In terms of assembly, monomer.

The protein localises to the cytoplasm. It carries out the reaction 7-aminomethyl-7-carbaguanosine(34) in tRNA + S-adenosyl-L-methionine = epoxyqueuosine(34) in tRNA + adenine + L-methionine + 2 H(+). It participates in tRNA modification; tRNA-queuosine biosynthesis. Functionally, transfers and isomerizes the ribose moiety from AdoMet to the 7-aminomethyl group of 7-deazaguanine (preQ1-tRNA) to give epoxyqueuosine (oQ-tRNA). The sequence is that of S-adenosylmethionine:tRNA ribosyltransferase-isomerase from Shewanella halifaxensis (strain HAW-EB4).